We begin with the raw amino-acid sequence, 260 residues long: tRNA pseudouridine synthase A (260 aa).

Residue aspartate 52 is the Nucleophile of the active site. Tyrosine 110 contacts substrate.

The protein belongs to the tRNA pseudouridine synthase TruA family. In terms of assembly, homodimer.

The catalysed reaction is uridine(38/39/40) in tRNA = pseudouridine(38/39/40) in tRNA. In terms of biological role, formation of pseudouridine at positions 38, 39 and 40 in the anticodon stem and loop of transfer RNAs. This Thiobacillus denitrificans (strain ATCC 25259 / T1) protein is tRNA pseudouridine synthase A.